The following is a 324-amino-acid chain: MAAVKTPVIVVPVIDRPPSETFPNVHEHINDQKFDDVKDNEVMPEKRNVVVVKDDPDHYKDYAFIQWTGGNIRNDDKYTHFFSGFCNTMCTEETKRNIARHLALWDSNFFTELENKKVEYVVIVENDNVIEDITFLRPVLKAMHDKKIDILQMREIITGNKVKTELVMDKNHTIFTYTGGYDVSLSAYIIRVTTALNIVDEIIKSGGLSSGFYFEIARIENEMKINRQILDNAAKYVEHDPRLVAEHRFENMKPNFWSRIGTAAAKRYPGVMYAFTTPLISFFGLFDINVIGLIVILFIMFMLIFNVKSKLLWFLTGTFVTAFI.

Residues 1–284 (MAAVKTPVIV…FTTPLISFFG (284 aa)) are Virion surface-facing. A helical; Signal-anchor membrane pass occupies residues 285 to 305 (LFDINVIGLIVILFIMFMLIF). The Intravirion portion of the chain corresponds to 306–324 (NVKSKLLWFLTGTFVTAFI).

It belongs to the orthopoxvirus OPG108 family. In terms of processing, does not contain disulfide bonds.

It localises to the virion membrane. Functionally, envelope protein that binds to heparan sulfate on the cell surface and might provide virion attachment to target cell. The polypeptide is Envelope protein H3 (OPG108) (Homo sapiens (Human)).